Reading from the N-terminus, the 1977-residue chain is Echinoderm microtubule-associated protein-like 5 (1977 aa).

WD repeat units follow at residues 59-100 (GHSD…TVSV), 104-145 (VHTH…MLSM), 148-187 (GHTD…LTPK), 195-233 (GDLQ…RTIQ), 235-273 (AHTA…TVID), 280-321 (GYKG…LIMQ), 323-362 (HCEG…LIAR), 364-403 (NMDE…EVVH), 406-445 (DRKE…KKVG), 449-488 (GSLS…EVTS), and 561-601 (GHSA…KLKD). The segment at 609–629 (ESLTESNSDESDSDLSDVPEL) is disordered. Over residues 615–629 (NSDESDSDLSDVPEL) the composition is skewed to acidic residues. WD repeat units lie at residues 725 to 766 (GHDD…PLSI), 770 to 811 (YHQY…KLSV), 814 to 853 (GSKD…LIGR), 861 to 900 (GKND…KTVK), 901 to 940 (AHDG…KTYA), 996 to 1035 (HMEG…CMLA), 1038 to 1077 (KLKK…DLVS), 1080 to 1120 (HRKD…RVGV), and 1236 to 1276 (AHST…HREK). Disordered stretches follow at residues 1274 to 1299 (REKK…SDVT) and 1323 to 1363 (PHLQ…NVGK). Over residues 1281–1294 (SEESDTDSEEDGGY) the composition is skewed to acidic residues. The segment covering 1326–1337 (QQKEPSVDERQG) has biased composition (basic and acidic residues). 10 WD repeats span residues 1420–1471 (EHND…TLSI), 1475–1516 (SHSK…KIAS), 1519–1558 (GHNQ…LLSK), 1568–1606 (ARMQ…RVVA), 1608–1654 (AHNG…RAFR), 1699–1739 (GHVD…MLNK), 1741–1782 (NLGH…GKKR), 1783–1822 (DRRC…TLNR), 1895–1934 (AEKA…KFAK), and 1940–1977 (GHSP…HTPH).

The protein belongs to the WD repeat EMAP family. Highly expressed in brain, especially in hippocampus, cerebellum and olfactory bulb (at protein level).

The protein localises to the cytoplasm. It is found in the cytoskeleton. Its function is as follows. May modify the assembly dynamics of microtubules, such that microtubules are slightly longer, but more dynamic. This Rattus norvegicus (Rat) protein is Echinoderm microtubule-associated protein-like 5 (Eml5).